A 436-amino-acid polypeptide reads, in one-letter code: 3-ketoacyl-CoA thiolase (436 aa).

The Acyl-thioester intermediate role is filled by Cys99. Active-site proton acceptor residues include His392 and Cys422.

It belongs to the thiolase-like superfamily. Thiolase family. In terms of assembly, heterotetramer of two alpha chains (FadJ) and two beta chains (FadI).

Its subcellular location is the cytoplasm. It carries out the reaction an acyl-CoA + acetyl-CoA = a 3-oxoacyl-CoA + CoA. The protein operates within lipid metabolism; fatty acid beta-oxidation. Functionally, catalyzes the final step of fatty acid oxidation in which acetyl-CoA is released and the CoA ester of a fatty acid two carbons shorter is formed. The polypeptide is 3-ketoacyl-CoA thiolase (Escherichia coli O81 (strain ED1a)).